A 306-amino-acid chain; its full sequence is uncharacterized protein (306 aa).

The interval 287–306 (DEEGKSEDAKRQEEEKKKSS) is disordered.

Belongs to the aldo/keto reductase family.

The protein resides in the cytoplasm. It is found in the nucleus. This is an uncharacterized protein from Schizosaccharomyces pombe (strain 972 / ATCC 24843) (Fission yeast).